The primary structure comprises 83 residues: Hainantoxin-III 2 (83 aa).

An N-terminal signal peptide occupies residues 1 to 21; sequence MKASMYLALAGLVLLFVVGYA. Positions 22–48 are excised as a propeptide; it reads SESEEKEFPRELLSKIFAVDDFKGEER. Intrachain disulfides connect Cys-50–Cys-65, Cys-57–Cys-70, and Cys-64–Cys-77. Position 81 is a leucine amide (Leu-81).

This sequence belongs to the neurotoxin 10 (Hwtx-1) family. 15 (Hntx-3) subfamily. As to quaternary structure, monomer. As to expression, expressed by the venom gland.

The protein localises to the secreted. Its function is as follows. Selective antagonist of neuronal tetrodotoxin (TTX)-sensitive voltage-gated sodium channels (IC(50)=1270 nM on Nav1.1/SCN1A, 270 nM on Nav1.2/SCN2A, 491 nM on Nav1.3/SCN3A and 232 nM on Nav1.7/SCN9A). This toxin suppress Nav1.7 current amplitude without significantly altering the activation, inactivation, and repriming kinetics. Short extreme depolarizations partially activate the toxin-bound channel, indicating voltage-dependent inhibition of this toxin. This toxin increases the deactivation of the Nav1.7 current after extreme depolarizations. The toxin-Nav1.7 complex is gradually dissociated upon prolonged strong depolarizations in a voltage-dependent manner, and the unbound toxin rebinds to Nav1.7 after a long repolarization. Moreover, analysis of chimeric channels showed that the DIIS3-S4 linker is critical for toxin binding to Nav1.7. These data are consistent with this toxin interacting with Nav1.7 site 4 and trapping the domain II voltage sensor in the closed state. The polypeptide is Hainantoxin-III 2 (Cyriopagopus hainanus (Chinese bird spider)).